An 86-amino-acid polypeptide reads, in one-letter code: Probable weak neurotoxin NNAM2I (86 aa).

The N-terminal stretch at 1–21 is a signal peptide; it reads MKTLPLTLVVVTIVCLDLGYT. Intrachain disulfides connect Cys24-Cys45, Cys27-Cys32, Cys38-Cys63, Cys67-Cys78, and Cys79-Cys84.

It belongs to the three-finger toxin family. Ancestral subfamily. Orphan group II sub-subfamily. Expressed by the venom gland.

It is found in the secreted. Its function is as follows. Binds with low affinity to muscular (alpha-1-beta-1-delta-epsilon/CHRNA1-CHRNB1-CHRND-CHRNE) and very low affinity to neuronal (alpha-7/CHRNA7) nicotinic acetylcholine receptor (nAChR). The polypeptide is Probable weak neurotoxin NNAM2I (Naja atra (Chinese cobra)).